The sequence spans 144 residues: L-fucose mutarotase (144 aa).

Histidine 22 acts as the Proton donor in catalysis. Residues aspartate 30, arginine 109, and 131–133 contribute to the substrate site; that span reads YGN.

This sequence belongs to the RbsD / FucU family. FucU mutarotase subfamily. As to quaternary structure, homodecamer.

It is found in the cytoplasm. The catalysed reaction is alpha-L-fucose = beta-L-fucose. It functions in the pathway carbohydrate metabolism; L-fucose metabolism. Functionally, involved in the anomeric conversion of L-fucose. This Haemophilus influenzae (strain PittGG) protein is L-fucose mutarotase.